Consider the following 363-residue polypeptide: UDP-3-O-acylglucosamine N-acyltransferase (363 aa).

His237 functions as the Proton acceptor in the catalytic mechanism. Residues 338–363 are disordered; that stretch reads EQNSTDRAPNAKMLEVGVDPETTCSS.

It belongs to the transferase hexapeptide repeat family. LpxD subfamily. In terms of assembly, homotrimer.

It carries out the reaction a UDP-3-O-[(3R)-3-hydroxyacyl]-alpha-D-glucosamine + a (3R)-hydroxyacyl-[ACP] = a UDP-2-N,3-O-bis[(3R)-3-hydroxyacyl]-alpha-D-glucosamine + holo-[ACP] + H(+). It participates in bacterial outer membrane biogenesis; LPS lipid A biosynthesis. In terms of biological role, catalyzes the N-acylation of UDP-3-O-acylglucosamine using 3-hydroxyacyl-ACP as the acyl donor. Is involved in the biosynthesis of lipid A, a phosphorylated glycolipid that anchors the lipopolysaccharide to the outer membrane of the cell. The sequence is that of UDP-3-O-acylglucosamine N-acyltransferase from Synechococcus sp. (strain JA-2-3B'a(2-13)) (Cyanobacteria bacterium Yellowstone B-Prime).